The sequence spans 738 residues: NADH dehydrogenase [ubiquinone] iron-sulfur protein 1, mitochondrial (738 aa).

A mitochondrion-targeting transit peptide spans Met-1–Thr-27. The 79-residue stretch at Asp-66–Ile-144 folds into the 2Fe-2S ferredoxin-type domain. [2Fe-2S] cluster-binding residues include Cys-100, Cys-111, Cys-114, and Cys-128. Residues Ile-144–Gly-183 form the 4Fe-4S His(Cys)3-ligated-type domain. Positions 160, 164, 167, 173, 212, 215, 218, and 262 each coordinate [4Fe-4S] cluster. In terms of domain architecture, 4Fe-4S Mo/W bis-MGD-type spans Leu-281–Arg-337.

Belongs to the complex I 75 kDa subunit family. In terms of assembly, complex I is composed of about 45 different subunits. This is a component of the iron-sulfur (IP) fragment of the enzyme. It depends on [2Fe-2S] cluster as a cofactor. [4Fe-4S] cluster is required as a cofactor.

The protein resides in the mitochondrion inner membrane. It catalyses the reaction a ubiquinone + NADH + 5 H(+)(in) = a ubiquinol + NAD(+) + 4 H(+)(out). Its function is as follows. Core subunit of the mitochondrial membrane respiratory chain NADH dehydrogenase (Complex I) that is believed to belong to the minimal assembly required for catalysis. Complex I functions in the transfer of electrons from NADH to the respiratory chain. The immediate electron acceptor for the enzyme is believed to be ubiquinone. This is the largest subunit of complex I and it is a component of the iron-sulfur (IP) fragment of the enzyme. It may form part of the active site crevice where NADH is oxidized. In Solanum tuberosum (Potato), this protein is NADH dehydrogenase [ubiquinone] iron-sulfur protein 1, mitochondrial.